The primary structure comprises 192 residues: MDLNTLISQYGYAALVIGSLAEGETVTLLGGVAAHQGLLKFPLVVLSVALGGMIGDQVLYLCGRRFGGKLLRRFSKHQDKIERAQKLIQRHPYLFVIGTRFMYGFRVIGPTLIGASQLPPKIFLPLNILGAFAWALIFTTIGYAGGQVIAPWLHNLDQHLKHWVWLILVVVLVVGVRWWLKRRGKKKPDHQA.

At 1–40 (MDLNTLISQYGYAALVIGSLAEGETVTLLGGVAAHQGLLK) the chain is on the periplasmic side. The chain crosses the membrane as a helical span at residues 41–61 (FPLVVLSVALGGMIGDQVLYL). Topologically, residues 62–121 (CGRRFGGKLLRRFSKHQDKIERAQKLIQRHPYLFVIGTRFMYGFRVIGPTLIGASQLPPK) are cytoplasmic. A helical membrane pass occupies residues 122–142 (IFLPLNILGAFAWALIFTTIG). The Periplasmic portion of the chain corresponds to 143–159 (YAGGQVIAPWLHNLDQH). A helical membrane pass occupies residues 160 to 180 (LKHWVWLILVVVLVVGVRWWL). The Cytoplasmic portion of the chain corresponds to 181–192 (KRRGKKKPDHQA).

The protein belongs to the DedA family.

The protein resides in the cell inner membrane. In Escherichia coli (strain K12), this protein is Inner membrane protein YohD (yohD).